The chain runs to 63 residues: Large ribosomal subunit protein bL28 (63 aa).

Belongs to the bacterial ribosomal protein bL28 family.

The chain is Large ribosomal subunit protein bL28 from Syntrophotalea carbinolica (strain DSM 2380 / NBRC 103641 / GraBd1) (Pelobacter carbinolicus).